A 123-amino-acid chain; its full sequence is Ribosome-binding factor A (123 aa).

It belongs to the RbfA family. Monomer. Binds 30S ribosomal subunits, but not 50S ribosomal subunits or 70S ribosomes.

Its subcellular location is the cytoplasm. In terms of biological role, one of several proteins that assist in the late maturation steps of the functional core of the 30S ribosomal subunit. Associates with free 30S ribosomal subunits (but not with 30S subunits that are part of 70S ribosomes or polysomes). Required for efficient processing of 16S rRNA. May interact with the 5'-terminal helix region of 16S rRNA. This Chlorobium chlorochromatii (strain CaD3) protein is Ribosome-binding factor A.